The sequence spans 113 residues: Hydrogenase maturation factor HypA (113 aa).

His2 provides a ligand contact to Ni(2+). Zn(2+)-binding residues include Cys73, Cys76, Cys89, and Cys92.

Belongs to the HypA/HybF family.

Its function is as follows. Involved in the maturation of [NiFe] hydrogenases. Required for nickel insertion into the metal center of the hydrogenase. The sequence is that of Hydrogenase maturation factor HypA from Actinobacillus succinogenes (strain ATCC 55618 / DSM 22257 / CCUG 43843 / 130Z).